The sequence spans 233 residues: Coenzyme Q-binding protein COQ10 homolog, mitochondrial (233 aa).

Residues 1–34 constitute a mitochondrion transit peptide; the sequence is MAEKATSLFLRAMEISEKQSFDVMRRNSSCTIRH.

The protein belongs to the COQ10 family. As to quaternary structure, interacts with coenzyme Q.

It is found in the mitochondrion inner membrane. Its function is as follows. Required for the function of coenzyme Q in the respiratory chain. May serve as a chaperone or may be involved in the transport of Q6 from its site of synthesis to the catalytic sites of the respiratory complexes. This chain is Coenzyme Q-binding protein COQ10 homolog, mitochondrial, found in Danio rerio (Zebrafish).